The primary structure comprises 216 residues: Guanylate kinase (216 aa).

One can recognise a Guanylate kinase-like domain in the interval 11-189 (GVLIVISGPS…AVKKIEAILL (179 aa)). 18–25 (GPSGAGKG) lines the ATP pocket.

Belongs to the guanylate kinase family.

The protein localises to the cytoplasm. The catalysed reaction is GMP + ATP = GDP + ADP. Essential for recycling GMP and indirectly, cGMP. This chain is Guanylate kinase, found in Clostridium perfringens (strain ATCC 13124 / DSM 756 / JCM 1290 / NCIMB 6125 / NCTC 8237 / Type A).